A 158-amino-acid chain; its full sequence is Protein BTG2 (158 aa).

Serine 147 carries the post-translational modification Phosphoserine; by MAPK1 and MAPK3. Phosphoserine; by MAPK14 is present on serine 149.

Belongs to the BTG family. Interacts with PRKCABP. Interacts with CNOT7 and CNOT8; indicative for an association with the CCR4-NOT complex. Interacts with PIN1, inducing mitochondrial depolarization. Phosphorylated at Ser-147 by MAPK1/ERK2 and MAPK3/ERK1, and at Ser-149 by MAPK14, leading to PIN1-binding and mitochondrial depolarization.

Its function is as follows. Anti-proliferative protein; the function is mediated by association with deadenylase subunits of the CCR4-NOT complex. Activates mRNA deadenylation in a CNOT6 and CNOT7-dependent manner. In vitro can inhibit deadenylase activity of CNOT7 and CNOT8. Involved in cell cycle regulation. Could be involved in the growth arrest and differentiation of the neuronal precursors. Modulates transcription regulation mediated by ESR1. Involved in mitochondrial depolarization and neurite outgrowth. This Homo sapiens (Human) protein is Protein BTG2 (BTG2).